The primary structure comprises 146 residues: 3-hydroxyacyl-[acyl-carrier-protein] dehydratase FabZ (146 aa).

His48 is an active-site residue.

This sequence belongs to the thioester dehydratase family. FabZ subfamily.

The protein localises to the cytoplasm. It catalyses the reaction a (3R)-hydroxyacyl-[ACP] = a (2E)-enoyl-[ACP] + H2O. Its function is as follows. Involved in unsaturated fatty acids biosynthesis. Catalyzes the dehydration of short chain beta-hydroxyacyl-ACPs and long chain saturated and unsaturated beta-hydroxyacyl-ACPs. The sequence is that of 3-hydroxyacyl-[acyl-carrier-protein] dehydratase FabZ from Paracidovorax citrulli (strain AAC00-1) (Acidovorax citrulli).